The chain runs to 1663 residues: MATDGASCEPDLSRAPEDAAGAAAEAAKKEFDVDTLSKSELRMLLSVMEGELEARDLVIEALRARRKEVFIQERYGRFNLNDPFLALQRDYEAGAGDKEKKPVCTNPLSILEAVMAHCKKMQERMSAQLAAAESRQKKLEMEKLQLQALEQEHKKLAARLEEERGKNKQVVLMLVKECKQLSGKVIEEAQKLEDVMAKLEEEKKKTNELEEELSAEKRRSTEMEAQMEKQLSEFDTEREQLRAKLNREEAHTTDLKEEIDKMRKMIEQLKKGSDSKPSLSLPRKTKDRRLVSISVGTEGTVTRSVACQTDLVTESADHMKKLPLIMPVKSSTGSPLVSANAKGSVCTSATMARPGIDRQASYGDLIGASVPAFPPPSANKIEENGPSTGSTSDPTSSTPPLPSNAAPPTAQTPGIAPQNSQAPPMHSLHSPCANTSLHPGLNPRIQAARFRFQGNANDPDQNGNTTQSPPSRDVSPTSRDNLVAKQLARNTVTQALSRFTSPQAGAPSRPGAPPTGDVGTHPPVGRTSLKTHGVARVDRGNPPPIPPKKPGLSQTPSPPHPQLKVIIDSSRASNTGAKVDNKTVASTPSSLPQGNRVINEENLPKSSSPQLPPKPSIDLTVAPAGCAVSALATSQVGAWPAATPGLNQPACSDSSLVIPTTIAFCSSINPVSASSCRPGASDSLLVTASGWSPSLTPLLMSGGPAPLAGRPTLLQQAAAQGNVTLLSMLLNEEGLDINYSCEDGHSALYSAAKNGHTDCVRLLLSAEAQVNAADKNGFTPLCAAAAQGHFECVELLISYDANINHAADGGQTPLYLACKNGNKECIKLLLEAGTNRSVKTTDGWTPVHAAVDTGNVDSLKLLMYHRIPAHGNSFNEEESESSVFDLDGGEESPEGICKPVVPADLINHANREGWTAAHIAASKGFKNCLEILCRHGGLEPERRDKCNRTVHDVATDDCKHLLENLNALKIPLRISVGEIEPSNYGSDDLECENTICALNIRKQTSWDDFSKAVSQALTNHFQAISSDGWWSLEDVTCNNTTDSNIGLSARSIRSITLGNVPWSVGQSFAQSPWDFMRKNKAEHITVLLSGPQEGCLSSVTYASMIPLQMMQNYLRLVEQYHNVIFHGPEGSLQDYIVHQLALCLKHRQMAAGFSCEIVRAEVDAGFSKEQLLDLFISSACLIPVKQSPSKKKIIIILENLEKSSLSELLRDFLAPLENRSTESPCTFQKGNGLSECYYFHENCFLMGTIAKACLQGSDLLVQQHFRWVQLRWDGEPMQGLLQRFLRRKVVNKFKGQAPSPCDPVCKIVDWALSVWRQLNSCLARLGTPEALLGPKYFLSCPVVPGHAQVTVKWMSKLWNGVIAPRVQEAILSRASVKRQPGFGQTTAKRHPSQGQQAVVKAALSILLNKAVLHGCPLPRAELDQHTADFKGGSFPLSIVSSYNTCNKKKGESGAWRKVNTSPRRKSGRFSLPTWNKPDLSTEGMKNKTISQLNCNRNASLSKQKSLENDLSLTLNLDQRLSLGSDDEADLVKELQSMCSSKSESDISKIADSRDDLRMFDSSGNNPVLSATINNPRMPVSQKEVSPLSSHQTTECSNSKSKTELGVSRVKSFLPVPRSKVTQCSQNTKRSSSSSNTRQIEINNNSKEENWNLHKNGHLEKPNK.

Disordered regions lie at residues 1–23 (MATDGASCEPDLSRAPEDAAGAA), 203–222 (KKKTNELEEELSAEKRRSTE), 367–440 (GASV…LHPG), 454–478 (GNANDPDQNGNTTQSPPSRDVSPTS), and 498–614 (RFTS…LPPK). Positions 119-276 (KKMQERMSAQ…EQLKKGSDSK (158 aa)) form a coiled coil. The segment covering 386–396 (PSTGSTSDPTS) has biased composition (low complexity). Arginine 498 bears the Asymmetric dimethylarginine mark. The span at 583–593 (TVASTPSSLPQ) shows a compositional bias: polar residues. ANK repeat units follow at residues 709–739 (GRPTLLQQAAAQGNVTLLSMLLNEEGLDINY), 743–772 (DGHSALYSAAKNGHTDCVRLLLSAEAQVNA), 776–805 (NGFTPLCAAAAQGHFECVELLISYDANINH), 809–838 (GGQTPLYLACKNGNKECIKLLLEAGTNRSV), 842–871 (DGWTPVHAAVDTGNVDSLKLLMYHRIPAHG), and 912–942 (EGWTAAHIAASKGFKNCLEILCRHGGLEPER). The disordered stretch occupies residues 1448 to 1483 (KKGESGAWRKVNTSPRRKSGRFSLPTWNKPDLSTEG). Residue serine 1524 is modified to Phosphoserine. Residues 1560–1663 (DSSGNNPVLS…KNGHLEKPNK (104 aa)) form a disordered region. Polar residues-rich tracts occupy residues 1561 to 1574 (SSGNNPVLSATINN) and 1582 to 1599 (KEVSPLSSHQTTECSNSK). Over residues 1624–1638 (SQNTKRSSSSSNTRQ) the composition is skewed to low complexity. Residues 1645–1663 (SKEENWNLHKNGHLEKPNK) are compositionally biased toward basic and acidic residues.

Interacts with CTTN/cortactin SH3 domain. Interacts with STRN, STRN4/zinedin and MOB4/phocein; this interactions mediate the association with the STRIPAK core complex and may regulate dendritic spine distribution of the STRIPAK complex in hippocampal neurons. Activation of glutamate receptors weakens the interaction with STRN and STRN4.

The protein resides in the cytoplasm. It localises to the cell cortex. Its subcellular location is the cell projection. The protein localises to the dendritic spine. Its function is as follows. Regulates the dendritic spine distribution of CTTN/cortactin in hippocampal neurons, and thus controls dendritic spinogenesis and dendritic spine maintenance. Associates with the striatin-interacting phosphatase and kinase (STRIPAK) core complex to regulate dendritic spine distribution of the STRIPAK complex in hippocampal neurons. The polypeptide is Cortactin-binding protein 2 (CTTNBP2) (Gorilla gorilla gorilla (Western lowland gorilla)).